Reading from the N-terminus, the 215-residue chain is Glutathione S-transferase F9 (215 aa).

Residues V2–G81 form the GST N-terminal domain. Residue A11–S12 participates in glutathione binding. S12 carries the post-translational modification Phosphoserine. Residue M35 is modified to Methionine sulfoxide. Residues H39–K40, T52–V53, and E65–S66 each bind glutathione. The region spanning T88–A215 is the GST C-terminal domain. M118, M123, and M184 each carry methionine sulfoxide.

This sequence belongs to the GST superfamily. Phi family. Post-translationally, oxidated at Met-35, Met-118, Met-123 and Met-184 in oxidative stress conditions (e.g. hydrogen peroxide H(2)O(2)).

Its subcellular location is the cytoplasm. The protein localises to the cytosol. It carries out the reaction RX + glutathione = an S-substituted glutathione + a halide anion + H(+). With respect to regulation, redox-regulated enzyme; in oxidative stress conditions methionine oxidation ensure a thermodynamic and structural compensatory mechanism to guarantee H(2)O(2) peroxidase activity despite transferase activity inhibition. In terms of biological role, in vitro, possesses glutathione S-transferase activity toward 1-chloro-2,4-dinitrobenzene (CDNB) and benzyl isothiocyanate (BITC), and glutathione peroxidase activity toward cumene hydroperoxide and linoleic acid-13-hydroperoxide. May be involved in the conjugation of reduced glutathione to a wide number of exogenous and endogenous hydrophobic electrophiles and have a detoxification role against certain herbicides. In Arabidopsis thaliana (Mouse-ear cress), this protein is Glutathione S-transferase F9.